The chain runs to 202 residues: Josephin-1 (202 aa).

Serine 15 carries the post-translational modification Phosphoserine. Residues 23-202 (PPQIYHEKQR…EAHQSWRTDV (180 aa)) enclose the Josephin domain. Residue cysteine 36 is the Nucleophile of the active site. Residue histidine 139 is the Proton acceptor of the active site.

In terms of assembly, interacts with beta-actin/ACTB. Monoubiquitinated. Ubiquitination activates deubiquitination activity in vitro.

The protein resides in the cell membrane. It is found in the cytoplasm. The catalysed reaction is Thiol-dependent hydrolysis of ester, thioester, amide, peptide and isopeptide bonds formed by the C-terminal Gly of ubiquitin (a 76-residue protein attached to proteins as an intracellular targeting signal).. In terms of biological role, deubiquitinates monoubiquitinated probes (in vitro). When ubiquitinated, cleaves 'Lys-63'-linked and 'Lys-48'-linked poly-ubiquitin chains (in vitro), hence may act as a deubiquitinating enzyme. May increase macropinocytosis and suppress clathrin- and caveolae-mediated endocytosis. May enhance membrane dynamics and cell motility independently of its catalytic activity. The chain is Josephin-1 (JOSD1) from Pongo abelii (Sumatran orangutan).